We begin with the raw amino-acid sequence, 212 residues long: MTSVLFTSGATVTFRELIEVITSYDFIVETIIGNGITRMIVQYGNEIETGTQKHVSEEFYRQCVEDKELKQSLQLEVVSGSQNDSNVVTYRSNKYRGFEMVVFPFSNDIGSFISESDVVISHAGTGSIIDTLRLEKPLIVVTNDKLMNKHQEEVADELVKLGCCRKMTIEDMKSSQLKDCISEILSGPETFNKLPECSTTEVEGIIYHELVK.

Belongs to the glycosyltransferase 28 family. As to quaternary structure, heterodimer with ALG14 to form a functional enzyme.

The protein localises to the endoplasmic reticulum. It carries out the reaction an N-acetyl-alpha-D-glucosaminyl-diphospho-di-trans,poly-cis-dolichol + UDP-N-acetyl-alpha-D-glucosamine = an N,N'-diacetylchitobiosyl-diphospho-di-trans,poly-cis-dolichol + UDP + H(+). In terms of biological role, involved in protein N-glycosylation. Essential for the second step of the dolichol-linked oligosaccharide pathway. In Debaryomyces hansenii (strain ATCC 36239 / CBS 767 / BCRC 21394 / JCM 1990 / NBRC 0083 / IGC 2968) (Yeast), this protein is UDP-N-acetylglucosamine transferase subunit ALG13 (ALG13).